The sequence spans 258 residues: 5'-nucleotidase SurE (258 aa).

A divalent metal cation contacts are provided by D9, D10, S42, and N96.

The protein belongs to the SurE nucleotidase family. The cofactor is a divalent metal cation.

The protein localises to the cytoplasm. The catalysed reaction is a ribonucleoside 5'-phosphate + H2O = a ribonucleoside + phosphate. Its function is as follows. Nucleotidase that shows phosphatase activity on nucleoside 5'-monophosphates. This Campylobacter jejuni subsp. jejuni serotype O:6 (strain 81116 / NCTC 11828) protein is 5'-nucleotidase SurE.